Here is a 203-residue protein sequence, read N- to C-terminus: Amelogenin, Y isoform (203 aa).

Residues 1–16 (MGTWILFACLVGAAFA) form the signal peptide. The tract at residues 116 to 180 (MPVPGQQSMT…PPLPPMFPMR (65 aa)) is disordered. Residues 120 to 130 (GQQSMTPTQHH) are compositionally biased toward polar residues. Residues 131–142 (QPNLPLPAQQPF) show a composition bias toward low complexity. Residues 143 to 180 (QPQPVQPLPHQPMQPQPPVQPMQPLLPQPPLPPMFPMR) show a composition bias toward pro residues.

It belongs to the amelogenin family.

Its subcellular location is the secreted. It localises to the extracellular space. The protein resides in the extracellular matrix. Plays a role in biomineralization. Seems to regulate the formation of crystallites during the secretory stage of tooth enamel development. Thought to play a major role in the structural organization and mineralization of developing enamel. The sequence is that of Amelogenin, Y isoform (AMELY) from Pan troglodytes (Chimpanzee).